A 25-amino-acid polypeptide reads, in one-letter code: Chrysophsin-1 (25 aa).

Residue His-25 is modified to Histidine amide.

In terms of tissue distribution, gill. Localized in certain epithelial cells lining the surface of secondary lamellae and eosinophilic granule cell-like cells at the base of secondary lamellae.

The protein resides in the secreted. Has antibacterial activity against Gram-positive bacteria B.subtilis ATCC 6633, L.garvieae ATCC 49156 and S.iniae F-8502, and Gram-negative bacteria E.coli WT-2, V.anguillarum ATCC 19264, V.penaeicida KHA, V.harveyi ATCC 14126, V.vulnificus ATCC 33148, A.salmonicida NCMB 1102 and P.putida ATCC 12633. Has hemolytic activity against human red blood cells. Seems to disrupt the membranes by adopting an alpha helical conformation. May play a significant role in innate host defense. The chain is Chrysophsin-1 from Pagrus major (Red sea bream).